We begin with the raw amino-acid sequence, 228 residues long: MCINVCYLGEVEYQEALFIQERIWALRVEKKIGDTLLLLEHPPVITIGRRGSKKNILVSDEFLKKMDVKVFEVSRGGDVTYHGPGQLVGYPIFDLALTDRDIKKFVYLLEEVFIRLLKDQFGKEAHRDENKYTGVWVGNDKIVAIGIAVKKWVTMHGFAFNVNTNLEHFSWIVPCGLKDRGVTSLERLIGSTIRFEDVVDKVQTYFGKVFGKSLNILGKEKLFDLLKI.

Positions 30–214 (KKIGDTLLLL…YFGKVFGKSL (185 aa)) constitute a BPL/LPL catalytic domain. Substrate-binding positions include 75–82 (RGGDVTYH), 144–146 (AIG), and 157–159 (GFA). The Acyl-thioester intermediate role is filled by Cys175.

It belongs to the LipB family.

The protein resides in the cytoplasm. It carries out the reaction octanoyl-[ACP] + L-lysyl-[protein] = N(6)-octanoyl-L-lysyl-[protein] + holo-[ACP] + H(+). Its pathway is protein modification; protein lipoylation via endogenous pathway; protein N(6)-(lipoyl)lysine from octanoyl-[acyl-carrier-protein]: step 1/2. Its function is as follows. Catalyzes the transfer of endogenously produced octanoic acid from octanoyl-acyl-carrier-protein onto the lipoyl domains of lipoate-dependent enzymes. Lipoyl-ACP can also act as a substrate although octanoyl-ACP is likely to be the physiological substrate. The polypeptide is Octanoyltransferase (Caldicellulosiruptor bescii (strain ATCC BAA-1888 / DSM 6725 / KCTC 15123 / Z-1320) (Anaerocellum thermophilum)).